We begin with the raw amino-acid sequence, 519 residues long: Putative lipase ATG15 (519 aa).

The Cytoplasmic segment spans residues 1–5; sequence MYIPG. Residues 6–26 form a helical; Signal-anchor for type II membrane protein membrane-spanning segment; the sequence is PLRLSSYLLPFLSSPSPPAQS. Residues 27-519 lie on the Lumenal side of the membrane; it reads SPDTRTISFK…CYKWEFGEWN (493 aa). Asn-48, Asn-133, Asn-196, Asn-220, Asn-302, and Asn-309 each carry an N-linked (GlcNAc...) asparagine glycan. Catalysis depends on Ser-318, which acts as the Charge relay system. A glycan (N-linked (GlcNAc...) asparagine) is linked at Asn-361. The segment at 481-502 is disordered; it reads RRGPKRQPGGEDPKHGGVPKPV.

This sequence belongs to the AB hydrolase superfamily. Lipase family. As to quaternary structure, binds to both phosphatidylinositol (PI) and phosphatidylinositol 3,5-bisphosphate (PIP2).

The protein resides in the endosome. It localises to the multivesicular body membrane. It is found in the prevacuolar compartment membrane. The enzyme catalyses a triacylglycerol + H2O = a diacylglycerol + a fatty acid + H(+). Its function is as follows. Lipase which is essential for lysis of subvacuolar cytoplasm to vacuole targeted bodies and intravacuolar autophagic bodies. Involved in the lysis of intravacuolar multivesicular body (MVB) vesicles. The intravacuolar membrane disintegration by ATG15 is critical to life span extension. The chain is Putative lipase ATG15 (ATG15) from Cryptococcus neoformans var. neoformans serotype D (strain B-3501A) (Filobasidiella neoformans).